Here is a 148-residue protein sequence, read N- to C-terminus: D-aminoacyl-tRNA deacylase (148 aa).

The Gly-cisPro motif, important for rejection of L-amino acids motif lies at 137-138 (GP).

Belongs to the DTD family. As to quaternary structure, homodimer.

The protein localises to the cytoplasm. The enzyme catalyses glycyl-tRNA(Ala) + H2O = tRNA(Ala) + glycine + H(+). It catalyses the reaction a D-aminoacyl-tRNA + H2O = a tRNA + a D-alpha-amino acid + H(+). In terms of biological role, an aminoacyl-tRNA editing enzyme that deacylates mischarged D-aminoacyl-tRNAs. Also deacylates mischarged glycyl-tRNA(Ala), protecting cells against glycine mischarging by AlaRS. Acts via tRNA-based rather than protein-based catalysis; rejects L-amino acids rather than detecting D-amino acids in the active site. By recycling D-aminoacyl-tRNA to D-amino acids and free tRNA molecules, this enzyme counteracts the toxicity associated with the formation of D-aminoacyl-tRNA entities in vivo and helps enforce protein L-homochirality. In Finegoldia magna (strain ATCC 29328 / DSM 20472 / WAL 2508) (Peptostreptococcus magnus), this protein is D-aminoacyl-tRNA deacylase.